Here is a 402-residue protein sequence, read N- to C-terminus: Methylthioribose-1-phosphate isomerase (402 aa).

Residue aspartate 275 is the Proton donor of the active site.

The protein belongs to the eIF-2B alpha/beta/delta subunits family. MtnA subfamily.

It localises to the cytoplasm. Its subcellular location is the nucleus. The enzyme catalyses 5-(methylsulfanyl)-alpha-D-ribose 1-phosphate = 5-(methylsulfanyl)-D-ribulose 1-phosphate. It functions in the pathway amino-acid biosynthesis; L-methionine biosynthesis via salvage pathway; L-methionine from S-methyl-5-thio-alpha-D-ribose 1-phosphate: step 1/6. Its function is as follows. Catalyzes the interconversion of methylthioribose-1-phosphate (MTR-1-P) into methylthioribulose-1-phosphate (MTRu-1-P). This chain is Methylthioribose-1-phosphate isomerase, found in Clavispora lusitaniae (strain ATCC 42720) (Yeast).